We begin with the raw amino-acid sequence, 452 residues long: Phosphoglucosamine mutase (452 aa).

The active-site Phosphoserine intermediate is serine 104. 4 residues coordinate Mg(2+): serine 104, aspartate 241, aspartate 243, and aspartate 245. Residue serine 104 is modified to Phosphoserine.

The protein belongs to the phosphohexose mutase family. Requires Mg(2+) as cofactor. Activated by phosphorylation.

The enzyme catalyses alpha-D-glucosamine 1-phosphate = D-glucosamine 6-phosphate. Functionally, catalyzes the conversion of glucosamine-6-phosphate to glucosamine-1-phosphate. The chain is Phosphoglucosamine mutase from Arthrobacter sp. (strain FB24).